A 205-amino-acid polypeptide reads, in one-letter code: Holliday junction branch migration complex subunit RuvA (205 aa).

Positions Met1–Ile64 are domain I. The interval Thr65–Glu143 is domain II. The segment at Arg144–Pro156 is flexible linker. The interval Val157–Leu205 is domain III.

This sequence belongs to the RuvA family. Homotetramer. Forms an RuvA(8)-RuvB(12)-Holliday junction (HJ) complex. HJ DNA is sandwiched between 2 RuvA tetramers; dsDNA enters through RuvA and exits via RuvB. An RuvB hexamer assembles on each DNA strand where it exits the tetramer. Each RuvB hexamer is contacted by two RuvA subunits (via domain III) on 2 adjacent RuvB subunits; this complex drives branch migration. In the full resolvosome a probable DNA-RuvA(4)-RuvB(12)-RuvC(2) complex forms which resolves the HJ.

The protein resides in the cytoplasm. Its function is as follows. The RuvA-RuvB-RuvC complex processes Holliday junction (HJ) DNA during genetic recombination and DNA repair, while the RuvA-RuvB complex plays an important role in the rescue of blocked DNA replication forks via replication fork reversal (RFR). RuvA specifically binds to HJ cruciform DNA, conferring on it an open structure. The RuvB hexamer acts as an ATP-dependent pump, pulling dsDNA into and through the RuvAB complex. HJ branch migration allows RuvC to scan DNA until it finds its consensus sequence, where it cleaves and resolves the cruciform DNA. The polypeptide is Holliday junction branch migration complex subunit RuvA (Shewanella sediminis (strain HAW-EB3)).